The sequence spans 111 residues: Rhodanese domain-containing protein CG4456 (111 aa).

Residues 12–110 form the Rhodanese domain; sequence NHPDVYLIDV…SWNEWAQKEG (99 aa).

This is Rhodanese domain-containing protein CG4456 from Drosophila melanogaster (Fruit fly).